Here is a 486-residue protein sequence, read N- to C-terminus: UDP-N-acetylmuramate--L-alanine ligase (486 aa).

129 to 135 (GTHGKTT) contributes to the ATP binding site.

This sequence belongs to the MurCDEF family.

The protein localises to the cytoplasm. It catalyses the reaction UDP-N-acetyl-alpha-D-muramate + L-alanine + ATP = UDP-N-acetyl-alpha-D-muramoyl-L-alanine + ADP + phosphate + H(+). It participates in cell wall biogenesis; peptidoglycan biosynthesis. In terms of biological role, cell wall formation. The chain is UDP-N-acetylmuramate--L-alanine ligase from Vibrio vulnificus (strain CMCP6).